A 134-amino-acid polypeptide reads, in one-letter code: Cytochrome b (134 aa).

A run of 3 helical transmembrane segments spans residues 33–53 (FGSLLGVCLGVQILTGLFLAM), 77–98 (WLLRYLHANGASMFFICLYLHV), and 113–133 (WNIGILLLFAVMATDFMGYVL). 2 residues coordinate heme b: His-83 and His-97.

This sequence belongs to the cytochrome b family. The cytochrome bc1 complex contains 11 subunits: 3 respiratory subunits (MT-CYB, CYC1 and UQCRFS1), 2 core proteins (UQCRC1 and UQCRC2) and 6 low-molecular weight proteins (UQCRH/QCR6, UQCRB/QCR7, UQCRQ/QCR8, UQCR10/QCR9, UQCR11/QCR10 and a cleavage product of UQCRFS1). This cytochrome bc1 complex then forms a dimer. It depends on heme b as a cofactor.

It localises to the mitochondrion inner membrane. Its function is as follows. Component of the ubiquinol-cytochrome c reductase complex (complex III or cytochrome b-c1 complex) that is part of the mitochondrial respiratory chain. The b-c1 complex mediates electron transfer from ubiquinol to cytochrome c. Contributes to the generation of a proton gradient across the mitochondrial membrane that is then used for ATP synthesis. This is Cytochrome b (MT-CYB) from Sturnira tildae (Tilda's yellow-shouldered bat).